A 559-amino-acid chain; its full sequence is 2-isopropylmalate synthase (559 aa).

Residues 30-304 (PLWAAVDLRD…DPGIDFSRMK (275 aa)) enclose the Pyruvate carboxyltransferase domain. Aspartate 39, histidine 243, histidine 245, and asparagine 279 together coordinate Mg(2+). A regulatory domain region spans residues 436-559 (VPMGWVLRSY…ETSEQLIANS (124 aa)).

It belongs to the alpha-IPM synthase/homocitrate synthase family. LeuA type 2 subfamily. In terms of assembly, homodimer. Mg(2+) is required as a cofactor.

The protein resides in the cytoplasm. The catalysed reaction is 3-methyl-2-oxobutanoate + acetyl-CoA + H2O = (2S)-2-isopropylmalate + CoA + H(+). It functions in the pathway amino-acid biosynthesis; L-leucine biosynthesis; L-leucine from 3-methyl-2-oxobutanoate: step 1/4. Functionally, catalyzes the condensation of the acetyl group of acetyl-CoA with 3-methyl-2-oxobutanoate (2-ketoisovalerate) to form 3-carboxy-3-hydroxy-4-methylpentanoate (2-isopropylmalate). The chain is 2-isopropylmalate synthase from Alcanivorax borkumensis (strain ATCC 700651 / DSM 11573 / NCIMB 13689 / SK2).